The sequence spans 297 residues: CASP-like protein 4A2 (297 aa).

The tract at residues 1–136 is disordered; the sequence is MKMKRTVSSN…MNGEESATTA (136 aa). Over 1-149 the chain is Cytoplasmic; sequence MKMKRTVSSN…ARRDDLVSVT (149 aa). Residues 8 to 19 are compositionally biased toward low complexity; sequence SSNSEAYSYNES. Positions 69-83 are enriched in pro residues; sequence LPSPIPPPPPQIPPP. The segment covering 93 to 121 has biased composition (polar residues); that stretch reads MNSSLDKSPSSMVVQNSWVREDGQQNTTR. Residues 150 to 170 form a helical membrane-spanning segment; the sequence is ALGFRITEVILCVISFSIMAA. Over 171–189 the chain is Extracellular; sequence DKTQGWSGDSYDRYKEYRY. A helical transmembrane segment spans residues 190 to 210; sequence CLAVNVIAFVYSAFEACDAAC. Topologically, residues 211 to 225 are cytoplasmic; it reads YMAKESYMMNCGFHD. Residues 226-246 traverse the membrane as a helical segment; the sequence is LFVFSMDQLLAYLLMSASSCA. The Extracellular portion of the chain corresponds to 247–265; sequence ATRVDDWVSNWGKDEFTQM. Residues 266 to 286 traverse the membrane as a helical segment; that stretch reads ATASIAVSFLAFGAFAVSALI. Residues 287 to 297 lie on the Cytoplasmic side of the membrane; it reads SSYRLFTHASS.

This sequence belongs to the Casparian strip membrane proteins (CASP) family. In terms of assembly, homodimer and heterodimers.

It localises to the cell membrane. In Arabidopsis lyrata subsp. lyrata (Lyre-leaved rock-cress), this protein is CASP-like protein 4A2.